A 54-amino-acid chain; its full sequence is Large ribosomal subunit protein bL33A (54 aa).

It belongs to the bacterial ribosomal protein bL33 family.

The sequence is that of Large ribosomal subunit protein bL33A from Streptomyces griseus subsp. griseus (strain JCM 4626 / CBS 651.72 / NBRC 13350 / KCC S-0626 / ISP 5235).